The primary structure comprises 159 residues: Ecotin (159 aa).

An N-terminal signal peptide occupies residues 1 to 22; it reads MRPTPLSTILALTMAATAPAMA. A disulfide bridge connects residues Cys-68 and Cys-105.

Belongs to the protease inhibitor I11 (ecotin) family. As to quaternary structure, homodimer.

It localises to the periplasm. General inhibitor of family S1 serine proteases. The chain is Ecotin from Pseudomonas putida (strain W619).